A 71-amino-acid polypeptide reads, in one-letter code: Arrestin-D (71 aa).

It belongs to the arrestin family. As to expression, adrenal, cerebral cortex, heart, liver, lung, pituitary and testis.

The sequence is that of Arrestin-D (Dar) from Rattus norvegicus (Rat).